The following is a 283-amino-acid chain: Thymidylate synthase (283 aa).

R22 is a binding site for dUMP. The active-site Nucleophile is the C160. DUMP is bound by residues 180 to 183 (RSCD), N191, and 221 to 223 (HIY). D183 contributes to the (6R)-5,10-methylene-5,6,7,8-tetrahydrofolate binding site. A (6R)-5,10-methylene-5,6,7,8-tetrahydrofolate-binding site is contributed by S282.

It belongs to the thymidylate synthase family. Bacterial-type ThyA subfamily. Homodimer.

The protein resides in the cytoplasm. The enzyme catalyses dUMP + (6R)-5,10-methylene-5,6,7,8-tetrahydrofolate = 7,8-dihydrofolate + dTMP. The protein operates within pyrimidine metabolism; dTTP biosynthesis. Functionally, catalyzes the reductive methylation of 2'-deoxyuridine-5'-monophosphate (dUMP) to 2'-deoxythymidine-5'-monophosphate (dTMP) while utilizing 5,10-methylenetetrahydrofolate (mTHF) as the methyl donor and reductant in the reaction, yielding dihydrofolate (DHF) as a by-product. This enzymatic reaction provides an intracellular de novo source of dTMP, an essential precursor for DNA biosynthesis. The chain is Thymidylate synthase from Mannheimia succiniciproducens (strain KCTC 0769BP / MBEL55E).